Here is a 137-residue protein sequence, read N- to C-terminus: Small ribosomal subunit protein uS9 (137 aa).

Positions 118-137 (KERKKYGLRKARKAPQYSKR) are disordered.

The protein belongs to the universal ribosomal protein uS9 family.

This Acaryochloris marina (strain MBIC 11017) protein is Small ribosomal subunit protein uS9.